The following is a 214-amino-acid chain: Melanoregulin (214 aa).

Residues L162–R172 carry the Cholesterol-binding sequence motif motif. Phosphoserine is present on S213.

This sequence belongs to the melanoregulin family. Identified in a complex with RILP and DCTN1; interacts directly with RILP, but does not interact directly with DCTN1. Interacts with PRPH2. In terms of processing, palmitoylated. Palmitoylation is required to maintain the protein at the melanosome membrane. In terms of tissue distribution, detected in melanocytes. Expressed in retina, in retinal pigment epithelium (at protein level). Widely expressed with higher expression in skin, heart, liver, testis and thymus. Detected in retina, in retinal pigment epithelium cells.

It localises to the apical cell membrane. Its subcellular location is the melanosome membrane. It is found in the lysosome membrane. The protein localises to the cytoplasmic vesicle membrane. Functionally, probably functions as a cargo-recognition protein that couples cytoplasmic vesicles to the transport machinery. Plays a role in hair pigmentation, a process that involves shedding of melanosome-containing vesicles from melanocytes, followed by phagocytosis of the melanosome-containing vesicles by keratinocytes. Functions on melanosomes as receptor for RILP and the complex formed by RILP and DCTN1, and thereby contributes to retrograde melanosome transport from the cell periphery to the center. Overexpression causes accumulation of late endosomes and/or lysosomes at the microtubule organising center (MTOC) at the center of the cell. Probably binds cholesterol and requires the presence of cholesterol in membranes to function in microtubule-mediated retrograde organelle transport. Binds phosphatidylinositol 3-phosphate, phosphatidylinositol 4-phosphate, phosphatidylinositol 5-phosphate and phosphatidylinositol 3,5-bisphosphate, but not phosphatidylinositol 3,4-bisphosphate or phosphatidylinositol 4,5-bisphosphate. Required for normal phagosome clearing and normal activation of lysosomal enzymes in lysosomes from retinal pigment epithelium cells. Required for normal degradation of the lipofuscin component N-retinylidene-N-retinylethanolamine (A2E) in the eye. May function in membrane fusion and regulate the biogenesis of disk membranes of photoreceptor rod cells. The protein is Melanoregulin (Mreg) of Mus musculus (Mouse).